The chain runs to 604 residues: NRPS-independent siderophore synthetase-like protein ankE (604 aa).

The catalysed reaction is cyclo(L-arginyl-(Z)-dehydro-4-O-homoseryl-tyrosyl) + citrate + ATP = NK13650 B + AMP + diphosphate + H(+). The protein operates within secondary metabolite biosynthesis. Functionally, NRPS-independent siderophore synthetase-like protein; part of the ank cluster that mediates the biosynthesis of NK13650 C, a highly modified cyclo-arginine-tyrosine dipeptide. AnkE is responsible of the production of NK13650 B via ligation of citrate to the ankD product. Within the pathway, the cyclodipeptide synthase ankA acts as the scaffold-generating enzyme and is responsible for formation of the cyclo-Arg-Tyr diketopiperazine (cRY) from L-Arg and L-Tyr. The ankA product cRY is desaturated by the cytochrome P450 monooxygenase ankB to yield a dehydro-cyclodipeptide intermediate. The FAD-dependent monooxygenase ankC then installs the m-OH, ankD catalyzes the attachment of L-homoserine, and ankE ligates citrate to the ankD product to yield NK13650 B. The O-methyltransferase ankF is responsible for methylation of the C-17 phenol group of NK13650 B to produce NK13650 D. Amidation of NK13650 D with L-Asp by ankG then leads to the production of NK13650 C, whereas amidation of NK13650 B produces NK13650 A. This chain is NRPS-independent siderophore synthetase-like protein ankE, found in Aspergillus thermomutatus (Neosartorya pseudofischeri).